Reading from the N-terminus, the 126-residue chain is Acidic phospholipase A2 S1E6-b (126 aa).

Residues Val-1–Gly-3 form the signal peptide. Intrachain disulfides connect Cys-29/Cys-119, Cys-31/Cys-47, Cys-46/Cys-98, Cys-52/Cys-126, Cys-53/Cys-91, Cys-60/Cys-84, and Cys-78/Cys-89. The Ca(2+) site is built by Tyr-30, Gly-32, and Gly-34. Residue His-50 is part of the active site. Asp-51 is a Ca(2+) binding site. Asp-92 is a catalytic residue.

As to quaternary structure, homodimer. The cofactor is Ca(2+). In terms of tissue distribution, expressed by the venom gland.

The protein localises to the secreted. It catalyses the reaction a 1,2-diacyl-sn-glycero-3-phosphocholine + H2O = a 1-acyl-sn-glycero-3-phosphocholine + a fatty acid + H(+). Its function is as follows. Snake venom phospholipase that inhibits ADP-induced platelet aggregation. PLA2 catalyzes the calcium-dependent hydrolysis of the 2-acyl groups in 3-sn-phosphoglycerides. The chain is Acidic phospholipase A2 S1E6-b from Calloselasma rhodostoma (Malayan pit viper).